The following is a 445-amino-acid chain: ATPase PAAT (445 aa).

A phosphoserine mark is found at serine 177, serine 182, serine 254, and serine 302. A disordered region spans residues 426-445 (PTGIPLRHYDSGERLSNGER). The span at 432–445 (RHYDSGERLSNGER) shows a compositional bias: basic and acidic residues.

Homodimer. Interacts with ABCB7, ABCB8/MITOSUR and ABCB10.

It localises to the cytoplasm. The protein localises to the mitochondrion. The enzyme catalyses ATP + H2O = ADP + phosphate + H(+). In terms of biological role, ATPase that regulates mitochondrial ABC transporters ABCB7, ABCB8/MITOSUR and ABCB10. Regulates mitochondrial ferric concentration and heme biosynthesis and plays a role in the maintenance of mitochondrial homeostasis and cell survival. The chain is ATPase PAAT from Homo sapiens (Human).